A 175-amino-acid chain; its full sequence is Bcl-2-related protein A1 (175 aa).

This sequence belongs to the Bcl-2 family. Interacts directly with BCL2L11/BIM, BAK1, BID, BMF and BBC3. Interacts directly with PMAIP1. Interacts with BOP. Interacts with ING4. Interacts with UBQLN4.

Its subcellular location is the cytoplasm. Retards apoptosis induced by IL-3 deprivation. May function in the response of hemopoietic cells to external signals and in maintaining endothelial survival during infection. Can inhibit apoptosis induced by serum starvation in the mammary epithelial cell line HC11. This chain is Bcl-2-related protein A1 (BCL2A1), found in Bos taurus (Bovine).